The primary structure comprises 585 residues: Proline--tRNA ligase (585 aa).

This sequence belongs to the class-II aminoacyl-tRNA synthetase family. ProS type 1 subfamily. As to quaternary structure, homodimer.

Its subcellular location is the cytoplasm. It carries out the reaction tRNA(Pro) + L-proline + ATP = L-prolyl-tRNA(Pro) + AMP + diphosphate. Functionally, catalyzes the attachment of proline to tRNA(Pro) in a two-step reaction: proline is first activated by ATP to form Pro-AMP and then transferred to the acceptor end of tRNA(Pro). As ProRS can inadvertently accommodate and process non-cognate amino acids such as alanine and cysteine, to avoid such errors it has two additional distinct editing activities against alanine. One activity is designated as 'pretransfer' editing and involves the tRNA(Pro)-independent hydrolysis of activated Ala-AMP. The other activity is designated 'posttransfer' editing and involves deacylation of mischarged Ala-tRNA(Pro). The misacylated Cys-tRNA(Pro) is not edited by ProRS. The polypeptide is Proline--tRNA ligase (Acidobacterium capsulatum (strain ATCC 51196 / DSM 11244 / BCRC 80197 / JCM 7670 / NBRC 15755 / NCIMB 13165 / 161)).